The primary structure comprises 389 residues: 2-deoxystreptamine N-acetyl-D-glucosaminyltransferase (389 aa).

Belongs to the glycosyltransferase group 1 family.

It catalyses the reaction 2-deoxystreptamine + UDP-N-acetyl-alpha-D-glucosamine = 2'-N-acetylparomamine + UDP + H(+). The protein operates within antibiotic biosynthesis; butirosin biosynthesis. Glycosyltransferase involved in the biosynthesis of butirosin by mediating conversion of 2-deoxystreptamine (2-DOS) to 2'-N-acetylparomamine using UDP-alpha-D-glucosamine as sugar donor. The polypeptide is 2-deoxystreptamine N-acetyl-D-glucosaminyltransferase (btrM) (Niallia circulans (Bacillus circulans)).